Here is a 71-residue protein sequence, read N- to C-terminus: Brevinin-1HN1 (71 aa).

An N-terminal signal peptide occupies residues 1 to 22 (MFTSKKPLLLLFFLGTINLSLC). Positions 23–45 (EQERDADEEERRDDPDERDVEVE) are excised as a propeptide. A disulfide bond links C65 and C71.

In terms of tissue distribution, expressed by the skin glands.

Its subcellular location is the secreted. Functionally, has antimicrobial activity against Gram-positive bacteria and fungi but has weak or no activity against a range of Gram-negative bacteria except P.faecalis. Active against the Gram-positive bacteria E.faecium 091299 (MIC=19 uM), E.faecalis 981 (MIC=19 uM), S.aureus ATCC 25923 (MIC=1.2 uM), S.carnosus KHS (MIC=4.8 uM), B.licheniformis X39 (MIC=2.4 uM) and R.rhodochrous X15 (MIC=1.2 uM). Active against the Gram-negative bacterium P.faecalis X29 (MIC=4.8 uM), is virtually inactive against E.coli ATCC 25922 (MIC=150 uM) and inactive against P.aeruginosa and S.typhi. Has antifungal activity against C.albicans ATCC 2002 (MIC=2.4 uM) and is also active against the slime mold 090223 (MIC=1.2 uM). Has low hemolytic activity against human erythrocytes (LC(50)=75 uM). In Odorrana hainanensis (Odor frog), this protein is Brevinin-1HN1.